The chain runs to 185 residues: CD160 antigen (185 aa).

Positions 1-27 are cleaved as a signal peptide; sequence MQRILMAPGQSCCALAILLAIVNFQHG. The Ig-like V-type domain maps to 28–136; it reads GCIHVTSSAS…HGHFLSVLVT (109 aa). Cystine bridges form between Cys47–Cys115 and Cys64–Cys71. N-linked (GlcNAc...) asparagine glycosylation is found at Asn138 and Asn156. Ser160 is lipidated: GPI-anchor amidated serine. Residues 161–185 constitute a propeptide, removed in mature form; the sequence is SGFLQVKAWGMLVTSLVALQALYTL.

In terms of assembly, homomultimer; disulfide-linked. Interacts with classical and non-classical MHC class I molecules. Interacts with TNFRSF14 (via cysteine-rich domain 1); this interaction is direct. Interacts with LCK and CD247/CD3 zeta chain. As to expression, expressed in resting and activated NK cell subsets (at protein level). Expressed in resting NKT cells (at protein level). Expressed in activated CD8+ T cells (at protein level). Highly expressed in intraepithelial lymphocyte (IEL) subsets, particularly in innate-like CD8A-positive IELs (at protein level).

The protein resides in the cell membrane. Its subcellular location is the secreted. Functionally, receptor on immune cells capable to deliver stimulatory or inhibitory signals that regulate cell activation and differentiation. Exists as a GPI-anchored and as a transmembrane form, each likely initiating distinct signaling pathways via phosphoinositol 3-kinase in activated NK cells and via LCK and CD247/CD3 zeta chain in activated T cells. Receptor for both classical and non-classical MHC class I molecules. Receptor or ligand for TNF superfamily member TNFRSF14, participating in bidirectional cell-cell contact signaling between antigen presenting cells and lymphocytes. Upon ligation of TNFRSF14, provides stimulatory signal to NK cells enhancing IFNG production and anti-tumor immune response. On activated CD4+ T cells, interacts with TNFRSF14 and down-regulates CD28 costimulatory signaling, restricting memory and alloantigen-specific immune response. In the context of bacterial infection, acts as a ligand for TNFRSF14 on epithelial cells, triggering the production of antimicrobial proteins and pro-inflammatory cytokines. The soluble GPI-cleaved form, usually released by activated lymphocytes, might play an immune regulatory role by limiting lymphocyte effector functions. In Mus musculus (Mouse), this protein is CD160 antigen.